The sequence spans 235 residues: NAD(P)H-quinone oxidoreductase subunit K (235 aa).

Positions 52, 53, 117, and 148 each coordinate [4Fe-4S] cluster. Low complexity predominate over residues 216–226 (AGAAVAPQLPV). The tract at residues 216–235 (AGAAVAPQLPVTEKEGRDRA) is disordered.

The protein belongs to the complex I 20 kDa subunit family. As to quaternary structure, NDH-1 can be composed of about 15 different subunits; different subcomplexes with different compositions have been identified which probably have different functions. It depends on [4Fe-4S] cluster as a cofactor.

The protein resides in the cellular thylakoid membrane. It carries out the reaction a plastoquinone + NADH + (n+1) H(+)(in) = a plastoquinol + NAD(+) + n H(+)(out). It catalyses the reaction a plastoquinone + NADPH + (n+1) H(+)(in) = a plastoquinol + NADP(+) + n H(+)(out). In terms of biological role, NDH-1 shuttles electrons from an unknown electron donor, via FMN and iron-sulfur (Fe-S) centers, to quinones in the respiratory and/or the photosynthetic chain. The immediate electron acceptor for the enzyme in this species is believed to be plastoquinone. Couples the redox reaction to proton translocation, and thus conserves the redox energy in a proton gradient. Cyanobacterial NDH-1 also plays a role in inorganic carbon-concentration. This chain is NAD(P)H-quinone oxidoreductase subunit K, found in Synechococcus elongatus (strain ATCC 33912 / PCC 7942 / FACHB-805) (Anacystis nidulans R2).